Consider the following 269-residue polypeptide: 4-hydroxy-tetrahydrodipicolinate reductase (269 aa).

NAD(+) contacts are provided by residues 8 to 13 (GAAGRM) and Glu34. Residue Arg35 coordinates NADP(+). Residues 98–100 (GTT) and 122–125 (APNY) each bind NAD(+). The Proton donor/acceptor role is filled by His155. (S)-2,3,4,5-tetrahydrodipicolinate is bound at residue His156. Catalysis depends on Lys159, which acts as the Proton donor. Position 165–166 (165–166 (GT)) interacts with (S)-2,3,4,5-tetrahydrodipicolinate.

Belongs to the DapB family.

The protein resides in the cytoplasm. The enzyme catalyses (S)-2,3,4,5-tetrahydrodipicolinate + NAD(+) + H2O = (2S,4S)-4-hydroxy-2,3,4,5-tetrahydrodipicolinate + NADH + H(+). The catalysed reaction is (S)-2,3,4,5-tetrahydrodipicolinate + NADP(+) + H2O = (2S,4S)-4-hydroxy-2,3,4,5-tetrahydrodipicolinate + NADPH + H(+). It participates in amino-acid biosynthesis; L-lysine biosynthesis via DAP pathway; (S)-tetrahydrodipicolinate from L-aspartate: step 4/4. In terms of biological role, catalyzes the conversion of 4-hydroxy-tetrahydrodipicolinate (HTPA) to tetrahydrodipicolinate. This chain is 4-hydroxy-tetrahydrodipicolinate reductase, found in Vibrio parahaemolyticus serotype O3:K6 (strain RIMD 2210633).